The chain runs to 261 residues: Acyl-[acyl-carrier-protein]--UDP-N-acetylglucosamine O-acyltransferase (261 aa).

It belongs to the transferase hexapeptide repeat family. LpxA subfamily. As to quaternary structure, homotrimer.

It is found in the cytoplasm. The enzyme catalyses a (3R)-hydroxyacyl-[ACP] + UDP-N-acetyl-alpha-D-glucosamine = a UDP-3-O-[(3R)-3-hydroxyacyl]-N-acetyl-alpha-D-glucosamine + holo-[ACP]. The protein operates within glycolipid biosynthesis; lipid IV(A) biosynthesis; lipid IV(A) from (3R)-3-hydroxytetradecanoyl-[acyl-carrier-protein] and UDP-N-acetyl-alpha-D-glucosamine: step 1/6. Involved in the biosynthesis of lipid A, a phosphorylated glycolipid that anchors the lipopolysaccharide to the outer membrane of the cell. In Paracoccus denitrificans (strain Pd 1222), this protein is Acyl-[acyl-carrier-protein]--UDP-N-acetylglucosamine O-acyltransferase.